Here is a 349-residue protein sequence, read N- to C-terminus: Delta(7)-sterol 5(6)-desaturase ERG3A (349 aa).

Transmembrane regions (helical) follow at residues 84–104 (ITWI…YIFI), 124–144 (IIAA…FFLL), and 162–182 (LWYD…CIYW). The region spanning 170 to 296 (PLFLLFTDFC…FTAFDRMGGT (127 aa)) is the Fatty acid hydroxylase domain. The short motif at 184-188 (HRWLH) is the Histidine box-1 element. The Histidine box-2 motif lies at 197–201 (HKLHH). A helical membrane pass occupies residues 227–247 (HIFPFIFPLQKMAYVALFVFV). The Histidine box-3 motif lies at 272-276 (HSLHH).

This sequence belongs to the sterol desaturase family.

It is found in the endoplasmic reticulum membrane. It carries out the reaction episterol + 2 Fe(II)-[cytochrome b5] + O2 + 2 H(+) = 5-dehydroepisterol + 2 Fe(III)-[cytochrome b5] + 2 H2O. Its pathway is steroid metabolism; ergosterol biosynthesis. Functionally, C-5 sterol desaturase; part of the third module of ergosterol biosynthesis pathway that includes the late steps of the pathway. ERG3A and ERG3BB catalyze the introduction of a C-5 double bond in the B ring to produce 5-dehydroepisterol. The third module or late pathway involves the ergosterol synthesis itself through consecutive reactions that mainly occur in the endoplasmic reticulum (ER) membrane. Firstly, the squalene synthase ERG9 catalyzes the condensation of 2 farnesyl pyrophosphate moieties to form squalene, which is the precursor of all steroids. Squalene synthase is crucial for balancing the incorporation of farnesyl diphosphate (FPP) into sterol and nonsterol isoprene synthesis. Secondly, squalene is converted into lanosterol by the consecutive action of the squalene epoxidase ERG1 and the lanosterol synthase ERG7. Then, the delta(24)-sterol C-methyltransferase ERG6 methylates lanosterol at C-24 to produce eburicol. Eburicol is the substrate of the sterol 14-alpha demethylase encoded by CYP51A, CYP51B and CYP51C, to yield 4,4,24-trimethyl ergosta-8,14,24(28)-trienol. CYP51B encodes the enzyme primarily responsible for sterol 14-alpha-demethylation, and plays an essential role in ascospore formation. CYP51A encodes an additional sterol 14-alpha-demethylase, induced on ergosterol depletion and responsible for the intrinsic variation in azole sensitivity. The third CYP51 isoform, CYP51C, does not encode a sterol 14-alpha-demethylase, but is required for full virulence on host wheat ears. The C-14 reductase ERG24 then reduces the C14=C15 double bond which leads to 4,4-dimethylfecosterol. A sequence of further demethylations at C-4, involving the C-4 demethylation complex containing the C-4 methylsterol oxidases ERG25, the sterol-4-alpha-carboxylate 3-dehydrogenase ERG26 and the 3-keto-steroid reductase ERG27, leads to the production of fecosterol via 4-methylfecosterol. ERG28 has a role as a scaffold to help anchor ERG25, ERG26 and ERG27 to the endoplasmic reticulum. The C-8 sterol isomerase ERG2 then catalyzes the reaction which results in unsaturation at C-7 in the B ring of sterols and thus converts fecosterol to episterol. The sterol-C5-desaturases ERG3A and ERG3BB then catalyze the introduction of a C-5 double bond in the B ring to produce 5-dehydroepisterol. The C-22 sterol desaturases ERG5A and ERG5B further convert 5-dehydroepisterol into ergosta-5,7,22,24(28)-tetraen-3beta-ol by forming the C-22(23) double bond in the sterol side chain. Finally, ergosta-5,7,22,24(28)-tetraen-3beta-ol is substrate of the C-24(28) sterol reductase ERG4 to produce ergosterol. The sequence is that of Delta(7)-sterol 5(6)-desaturase ERG3A from Gibberella zeae (strain ATCC MYA-4620 / CBS 123657 / FGSC 9075 / NRRL 31084 / PH-1) (Wheat head blight fungus).